We begin with the raw amino-acid sequence, 307 residues long: uncharacterized protein (307 aa).

This is an uncharacterized protein from Caenorhabditis elegans.